A 380-amino-acid chain; its full sequence is Queuine tRNA-ribosyltransferase (380 aa).

The Proton acceptor role is filled by D96. Substrate contacts are provided by residues 96 to 100 (DSGGF), D150, Q193, and G220. An RNA binding region spans residues 251–257 (GVGAPDS). The active-site Nucleophile is D270. Positions 275–279 (TRIAR) are RNA binding; important for wobble base 34 recognition. C308, C310, C313, and H339 together coordinate Zn(2+).

This sequence belongs to the queuine tRNA-ribosyltransferase family. As to quaternary structure, homodimer. Within each dimer, one monomer is responsible for RNA recognition and catalysis, while the other monomer binds to the replacement base PreQ1. Zn(2+) serves as cofactor.

It carries out the reaction 7-aminomethyl-7-carbaguanine + guanosine(34) in tRNA = 7-aminomethyl-7-carbaguanosine(34) in tRNA + guanine. It participates in tRNA modification; tRNA-queuosine biosynthesis. Functionally, catalyzes the base-exchange of a guanine (G) residue with the queuine precursor 7-aminomethyl-7-deazaguanine (PreQ1) at position 34 (anticodon wobble position) in tRNAs with GU(N) anticodons (tRNA-Asp, -Asn, -His and -Tyr). Catalysis occurs through a double-displacement mechanism. The nucleophile active site attacks the C1' of nucleotide 34 to detach the guanine base from the RNA, forming a covalent enzyme-RNA intermediate. The proton acceptor active site deprotonates the incoming PreQ1, allowing a nucleophilic attack on the C1' of the ribose to form the product. After dissociation, two additional enzymatic reactions on the tRNA convert PreQ1 to queuine (Q), resulting in the hypermodified nucleoside queuosine (7-(((4,5-cis-dihydroxy-2-cyclopenten-1-yl)amino)methyl)-7-deazaguanosine). In Streptococcus equi subsp. equi (strain 4047), this protein is Queuine tRNA-ribosyltransferase.